Here is a 511-residue protein sequence, read N- to C-terminus: Cytochrome P450 4A7 (511 aa).

Positions 1 to 4 (MSVS) are excised as a propeptide. Glu322 and Cys458 together coordinate heme.

It belongs to the cytochrome P450 family. It depends on heme as a cofactor. In terms of tissue distribution, liver, kidney, small intestine.

It is found in the endoplasmic reticulum membrane. The protein localises to the microsome membrane. It catalyses the reaction an omega-methyl-long-chain fatty acid + reduced [NADPH--hemoprotein reductase] + O2 = an omega-hydroxy-long-chain fatty acid + oxidized [NADPH--hemoprotein reductase] + H2O + H(+). Its function is as follows. Cytochromes P450 are a group of heme-thiolate monooxygenases. In liver microsomes, this enzyme is involved in an NADPH-dependent electron transport pathway. It oxidizes a variety of structurally unrelated compounds, including steroids, fatty acids, and xenobiotics. The kidney P-450 system is rather specialized for the omega-hydroxylation of fatty acids. Both P450-KA1 and P450-KA2 catalyze the omega- and (omega-1)-hydroxylation of various fatty acids with no drug-metabolizing activity, and hydroxylate prostaglandin A1 and A2 solely at the omega-position. This chain is Cytochrome P450 4A7 (CYP4A7), found in Oryctolagus cuniculus (Rabbit).